The following is a 65-amino-acid chain: MIVPVRCFTCGKVLADKYYEFKKRVEAGEDPGKVLDDLGVERYCCRRTLLSHVELIDQVMVYKVY.

Cysteine 7, cysteine 10, cysteine 44, and cysteine 45 together coordinate Zn(2+).

Belongs to the archaeal Rpo10/eukaryotic RPB10 RNA polymerase subunit family. As to quaternary structure, part of the RNA polymerase complex. Zn(2+) serves as cofactor.

The protein localises to the cytoplasm. The protein resides in the chromosome. It carries out the reaction RNA(n) + a ribonucleoside 5'-triphosphate = RNA(n+1) + diphosphate. Functionally, DNA-dependent RNA polymerase (RNAP) catalyzes the transcription of DNA into RNA using the four ribonucleoside triphosphates as substrates. In Thermococcus kodakarensis (strain ATCC BAA-918 / JCM 12380 / KOD1) (Pyrococcus kodakaraensis (strain KOD1)), this protein is DNA-directed RNA polymerase subunit Rpo10.